Reading from the N-terminus, the 184-residue chain is Large ribosomal subunit protein uL18 (184 aa).

Belongs to the universal ribosomal protein uL18 family. Part of the 50S ribosomal subunit. Contacts the 5S and 23S rRNAs.

Functionally, this is one of the proteins that bind and probably mediate the attachment of the 5S RNA into the large ribosomal subunit, where it forms part of the central protuberance. The polypeptide is Large ribosomal subunit protein uL18 (rpl18) (Haloferax volcanii (strain ATCC 29605 / DSM 3757 / JCM 8879 / NBRC 14742 / NCIMB 2012 / VKM B-1768 / DS2) (Halobacterium volcanii)).